The following is a 279-amino-acid chain: Movement protein (279 aa).

This sequence belongs to the cucumovirus movement protein family.

The protein localises to the host cell junction. The protein resides in the host plasmodesma. Functionally, transports viral genome to neighboring plant cells directly through plasmosdesmata, without any budding. The movement protein allows efficient cell to cell propagation, by bypassing the host cell wall barrier. Acts by forming a tubular structure at the host plasmodesmata, enlarging it enough to allow free passage of virion capsids. The protein is Movement protein of Cucumber mosaic virus (strain Kin) (CMV).